The chain runs to 799 residues: Cadherin-8 (799 aa).

A signal peptide spans methionine 1 to methionine 29. Residues alanine 30–arginine 61 constitute a propeptide that is removed on maturation. 5 consecutive Cadherin domains span residues glycine 62–phenylalanine 167, leucine 168–phenylalanine 276, alanine 277–phenylalanine 391, serine 392–proline 494, and glutamate 495–proline 616. The Extracellular portion of the chain corresponds to glycine 62 to methionine 621. The N-linked (GlcNAc...) asparagine glycan is linked to asparagine 188. N-linked (GlcNAc...) asparagine glycans are attached at residues asparagine 463, asparagine 473, and asparagine 544. Residues glycine 622–valine 642 form a helical membrane-spanning segment. Topologically, residues threonine 643–threonine 799 are cytoplasmic. Position 795 is a phosphoserine (serine 795).

The protein resides in the cell membrane. In terms of biological role, cadherins are calcium-dependent cell adhesion proteins. They preferentially interact with themselves in a homophilic manner in connecting cells; cadherins may thus contribute to the sorting of heterogeneous cell types. This is Cadherin-8 (Cdh8) from Rattus norvegicus (Rat).